We begin with the raw amino-acid sequence, 142 residues long: Maximins y/Hv type 1 (142 aa).

Positions 1–18 (MNFKYIVAVSFLIASGYA) are cleaved as a signal peptide. Residues 19-43 (RSEENDVQSLSQREVLEEESLREIR) constitute a propeptide that is removed on maturation. Position 68 is a phenylalanine amide (Phe68). A propeptide spanning residues 72–121 (TAEDHEVMKRLEAVMRDLDSLDHPEEASERETRGFNQEEIANLFTKKEKR) is cleaved from the precursor. Ile141 carries the isoleucine amide modification.

This sequence belongs to the bombinin family. In terms of tissue distribution, expressed by the skin glands.

It is found in the secreted. In terms of biological role, maximin-y shows antimicrobial activity against bacteria and against the fungus C.albicans. It has little hemolytic activity. Its function is as follows. Maximin-Hv shows antimicrobial activity against bacteria and against the fungus C.albicans. Shows strong hemolytic activity. The sequence is that of Maximins y/Hv type 1 from Bombina maxima (Giant fire-bellied toad).